We begin with the raw amino-acid sequence, 383 residues long: MNGNRFGRMFQVTTYGESHGDAMGVTVSGCPAGLELEEADIQAELDRRKPGQSMITTSRGEPDAVEINSGVQDGYTTGTPIGMVIENKDARSGKYEPYVTAPRPSHGDFTYSAKFGTRNWGGGGRSSARETVNWVAAGAIAQKILTEYGIKAKAHVNQIGDIKAPPVTFEEMLEHTEENEVRCAHPETAERMRERIDEYQTEGDSIGGSIYFEARGVPAGLGAPRFDSLPARLGKAMFSVPATTSVEYGLGHEAREWRGSNRNEDWEFDEDGNPIPEGNTHGGLQGGITTGQPIYGEATWHAPTSIPKEQQTVDWETGEQKDIQVVGRHDPVLPPRAVPVVEAMLNITILDFMLLDGQINPDRLDDNPGQYETEYHPSSPQTN.

NADP(+) is bound at residue R48. FMN-binding positions include 125-127, G286, 301-305, and R328; these read RSS and HAPTS. The interval 361 to 383 is disordered; the sequence is PDRLDDNPGQYETEYHPSSPQTN.

Belongs to the chorismate synthase family. FMNH2 is required as a cofactor.

It catalyses the reaction 5-O-(1-carboxyvinyl)-3-phosphoshikimate = chorismate + phosphate. It functions in the pathway metabolic intermediate biosynthesis; chorismate biosynthesis; chorismate from D-erythrose 4-phosphate and phosphoenolpyruvate: step 7/7. Its function is as follows. Catalyzes the anti-1,4-elimination of the C-3 phosphate and the C-6 proR hydrogen from 5-enolpyruvylshikimate-3-phosphate (EPSP) to yield chorismate, which is the branch point compound that serves as the starting substrate for the three terminal pathways of aromatic amino acid biosynthesis. This reaction introduces a second double bond into the aromatic ring system. The protein is Chorismate synthase of Haloquadratum walsbyi (strain DSM 16790 / HBSQ001).